Here is a 762-residue protein sequence, read N- to C-terminus: Endonuclease MutS2 (762 aa).

329–336 (GPNTGGKT) provides a ligand contact to ATP. The Smr domain maps to 682-757 (LNLIGKDVET…GSGVTVVYLE (76 aa)).

It belongs to the DNA mismatch repair MutS family. MutS2 subfamily. In terms of assembly, homodimer. Binds to stalled ribosomes, contacting rRNA.

Functionally, endonuclease that is involved in the suppression of homologous recombination and thus may have a key role in the control of bacterial genetic diversity. In terms of biological role, acts as a ribosome collision sensor, splitting the ribosome into its 2 subunits. Detects stalled/collided 70S ribosomes which it binds and splits by an ATP-hydrolysis driven conformational change. Acts upstream of the ribosome quality control system (RQC), a ribosome-associated complex that mediates the extraction of incompletely synthesized nascent chains from stalled ribosomes and their subsequent degradation. Probably generates substrates for RQC. In Aquifex aeolicus (strain VF5), this protein is Endonuclease MutS2.